The chain runs to 119 residues: Holo-[acyl-carrier-protein] synthase (119 aa).

Mg(2+) contacts are provided by aspartate 8 and glutamate 58.

This sequence belongs to the P-Pant transferase superfamily. AcpS family. Mg(2+) is required as a cofactor.

The protein localises to the cytoplasm. It catalyses the reaction apo-[ACP] + CoA = holo-[ACP] + adenosine 3',5'-bisphosphate + H(+). In terms of biological role, transfers the 4'-phosphopantetheine moiety from coenzyme A to a Ser of acyl-carrier-protein. The sequence is that of Holo-[acyl-carrier-protein] synthase from Streptococcus mutans serotype c (strain ATCC 700610 / UA159).